The following is a 166-amino-acid chain: Endoribonuclease YbeY (166 aa).

Residues His132, His136, and His142 each contribute to the Zn(2+) site.

Belongs to the endoribonuclease YbeY family. Requires Zn(2+) as cofactor.

It is found in the cytoplasm. In terms of biological role, single strand-specific metallo-endoribonuclease involved in late-stage 70S ribosome quality control and in maturation of the 3' terminus of the 16S rRNA. This is Endoribonuclease YbeY from Clostridium acetobutylicum (strain ATCC 824 / DSM 792 / JCM 1419 / IAM 19013 / LMG 5710 / NBRC 13948 / NRRL B-527 / VKM B-1787 / 2291 / W).